The sequence spans 297 residues: 4-hydroxy-tetrahydrodipicolinate synthase (297 aa).

Residue threonine 49 coordinates pyruvate. Tyrosine 137 serves as the catalytic Proton donor/acceptor. Lysine 165 functions as the Schiff-base intermediate with substrate in the catalytic mechanism. Position 208 (isoleucine 208) interacts with pyruvate.

It belongs to the DapA family. In terms of assembly, homotetramer; dimer of dimers.

The protein resides in the cytoplasm. The catalysed reaction is L-aspartate 4-semialdehyde + pyruvate = (2S,4S)-4-hydroxy-2,3,4,5-tetrahydrodipicolinate + H2O + H(+). Its pathway is amino-acid biosynthesis; L-lysine biosynthesis via DAP pathway; (S)-tetrahydrodipicolinate from L-aspartate: step 3/4. Catalyzes the condensation of (S)-aspartate-beta-semialdehyde [(S)-ASA] and pyruvate to 4-hydroxy-tetrahydrodipicolinate (HTPA). The sequence is that of 4-hydroxy-tetrahydrodipicolinate synthase from Gluconacetobacter diazotrophicus (strain ATCC 49037 / DSM 5601 / CCUG 37298 / CIP 103539 / LMG 7603 / PAl5).